The following is a 303-amino-acid chain: Ribonuclease P protein subunit p40 (303 aa).

As to quaternary structure, component of nuclear RNase P and RNase MRP ribonucleoproteins. RNase P consists of a catalytic RNA moiety and about 10 protein subunits; POP1, POP4, POP5, POP7, RPP14, RPP21, RPP25, RPP30, RPP38 and RPP40. Within the RNase P complex, POP1, POP7 and RPP25 form the 'finger' subcomplex, POP5, RPP14, RPP40 and homodimeric RPP30 form the 'palm' subcomplex, and RPP21, POP4 and RPP38 form the 'wrist' subcomplex. All subunits of the RNase P complex interact with the catalytic RNA. Several subunits of RNase P are also part of the RNase MRP complex. RNase MRP consists of a catalytic RNA moiety and about 8 protein subunits; POP1, POP7, RPP25, RPP30, RPP38, RPP40 and possibly also POP4 and POP5.

The protein resides in the nucleus. The protein localises to the nucleolus. Functionally, component of ribonuclease P, a ribonucleoprotein complex that generates mature tRNA molecules by cleaving their 5'-ends. Also a component of the MRP ribonuclease complex, which cleaves pre-rRNA sequences. The chain is Ribonuclease P protein subunit p40 (RPP40) from Bos taurus (Bovine).